The chain runs to 99 residues: NADH-quinone oxidoreductase subunit K (99 aa).

3 consecutive transmembrane segments (helical) span residues 3–23 (PDNY…GVLL), 28–48 (IVVF…FVAF), and 59–79 (VVAF…LAII).

Belongs to the complex I subunit 4L family. NDH-1 is composed of 14 different subunits. Subunits NuoA, H, J, K, L, M, N constitute the membrane sector of the complex.

Its subcellular location is the cell membrane. It carries out the reaction a quinone + NADH + 5 H(+)(in) = a quinol + NAD(+) + 4 H(+)(out). In terms of biological role, NDH-1 shuttles electrons from NADH, via FMN and iron-sulfur (Fe-S) centers, to quinones in the respiratory chain. The immediate electron acceptor for the enzyme in this species is believed to be a menaquinone. Couples the redox reaction to proton translocation (for every two electrons transferred, four hydrogen ions are translocated across the cytoplasmic membrane), and thus conserves the redox energy in a proton gradient. This chain is NADH-quinone oxidoreductase subunit K, found in Mycobacterium sp. (strain KMS).